The following is a 172-amino-acid chain: Propanediol dehydratase small subunit (172 aa).

The protein belongs to the diol/glycerol dehydratase small subunit family. The propanediol dehydratase enzyme is a heterotrimeric complex composed of a large (PduC), a medium (PduD) and a small (PduE) subunit. Requires adenosylcob(III)alamin as cofactor.

The protein resides in the bacterial microcompartment. It carries out the reaction propane-1,2-diol = propanal + H2O. The protein operates within polyol metabolism; 1,2-propanediol degradation. Functionally, part of the PduCDE complex that catalyzes the dehydration of 1,2-propanediol (1,2-PD) to propionaldehyde. Localized in the bacterial microcompartment (BMC) dedicated to 1,2-PD degradation. Its function is as follows. Expression of a cosmid containing the full 21-gene pdu operon in E.coli allows E.coli to grow on 1,2-propanediol (1,2-PD) with the appearance of BMCs in its cytoplasm. In terms of biological role, the 1,2-PD-specific bacterial microcompartment (BMC) concentrates low levels of 1,2-PD catabolic enzymes, concentrates volatile reaction intermediates thus enhancing pathway flux and keeps the level of toxic, mutagenic propionaldehyde low. In Citrobacter freundii, this protein is Propanediol dehydratase small subunit.